A 520-amino-acid polypeptide reads, in one-letter code: L-cysteine:1D-myo-inositol 2-amino-2-deoxy-alpha-D-glucopyranoside ligase (520 aa).

Zn(2+) is bound at residue C48. L-cysteinyl-5'-AMP contacts are provided by residues C48 to T51, T63, and N86 to T88. The 'HIGH' region signature appears at I50 to H60. Positions E192–P197 match the 'ERGGDP' region motif. W232 serves as a coordination point for L-cysteinyl-5'-AMP. C236 is a Zn(2+) binding site. Position 254–256 (G254–D256) interacts with L-cysteinyl-5'-AMP. H261 serves as a coordination point for Zn(2+). Position 288 (I288) interacts with L-cysteinyl-5'-AMP. Residues K294 to S298 carry the 'KMSKS' region motif.

Belongs to the class-I aminoacyl-tRNA synthetase family. MshC subfamily. Monomer. The cofactor is Zn(2+).

The enzyme catalyses 1D-myo-inositol 2-amino-2-deoxy-alpha-D-glucopyranoside + L-cysteine + ATP = 1D-myo-inositol 2-(L-cysteinylamino)-2-deoxy-alpha-D-glucopyranoside + AMP + diphosphate + H(+). In terms of biological role, catalyzes the ATP-dependent condensation of GlcN-Ins and L-cysteine to form L-Cys-GlcN-Ins. In Corynebacterium kroppenstedtii (strain DSM 44385 / JCM 11950 / CIP 105744 / CCUG 35717), this protein is L-cysteine:1D-myo-inositol 2-amino-2-deoxy-alpha-D-glucopyranoside ligase.